A 940-amino-acid chain; its full sequence is Isoleucine--tRNA ligase (940 aa).

The 'HIGH' region motif lies at Pro-58–His-68. Glu-564 contributes to the L-isoleucyl-5'-AMP binding site. The 'KMSKS' region motif lies at Lys-605–Ser-609. Position 608 (Lys-608) interacts with ATP. Positions 903, 906, 923, and 926 each coordinate Zn(2+).

It belongs to the class-I aminoacyl-tRNA synthetase family. IleS type 1 subfamily. Monomer. Zn(2+) is required as a cofactor.

Its subcellular location is the cytoplasm. The enzyme catalyses tRNA(Ile) + L-isoleucine + ATP = L-isoleucyl-tRNA(Ile) + AMP + diphosphate. Its function is as follows. Catalyzes the attachment of isoleucine to tRNA(Ile). As IleRS can inadvertently accommodate and process structurally similar amino acids such as valine, to avoid such errors it has two additional distinct tRNA(Ile)-dependent editing activities. One activity is designated as 'pretransfer' editing and involves the hydrolysis of activated Val-AMP. The other activity is designated 'posttransfer' editing and involves deacylation of mischarged Val-tRNA(Ile). The protein is Isoleucine--tRNA ligase of Shewanella baltica (strain OS223).